A 447-amino-acid polypeptide reads, in one-letter code: Na(+)-translocating NADH-quinone reductase subunit A (447 aa).

The protein belongs to the NqrA family. As to quaternary structure, composed of six subunits; NqrA, NqrB, NqrC, NqrD, NqrE and NqrF.

The catalysed reaction is a ubiquinone + n Na(+)(in) + NADH + H(+) = a ubiquinol + n Na(+)(out) + NAD(+). Its function is as follows. NQR complex catalyzes the reduction of ubiquinone-1 to ubiquinol by two successive reactions, coupled with the transport of Na(+) ions from the cytoplasm to the periplasm. NqrA to NqrE are probably involved in the second step, the conversion of ubisemiquinone to ubiquinol. The polypeptide is Na(+)-translocating NADH-quinone reductase subunit A (Neisseria meningitidis serogroup B (strain ATCC BAA-335 / MC58)).